The following is a 440-amino-acid chain: 3-phosphoshikimate 1-carboxyvinyltransferase (440 aa).

Residues Lys26, Ser27, and Arg31 each contribute to the 3-phosphoshikimate site. Lys26 provides a ligand contact to phosphoenolpyruvate. Phosphoenolpyruvate contacts are provided by Gly99 and Arg127. 4 residues coordinate 3-phosphoshikimate: Ser172, Gln174, Asp320, and Lys347. Gln174 contacts phosphoenolpyruvate. Asp320 (proton acceptor) is an active-site residue. Residues Arg351 and Arg392 each contribute to the phosphoenolpyruvate site.

It belongs to the EPSP synthase family. As to quaternary structure, monomer.

Its subcellular location is the cytoplasm. It carries out the reaction 3-phosphoshikimate + phosphoenolpyruvate = 5-O-(1-carboxyvinyl)-3-phosphoshikimate + phosphate. Its pathway is metabolic intermediate biosynthesis; chorismate biosynthesis; chorismate from D-erythrose 4-phosphate and phosphoenolpyruvate: step 6/7. Its function is as follows. Catalyzes the transfer of the enolpyruvyl moiety of phosphoenolpyruvate (PEP) to the 5-hydroxyl of shikimate-3-phosphate (S3P) to produce enolpyruvyl shikimate-3-phosphate and inorganic phosphate. This Xanthomonas axonopodis pv. citri (strain 306) protein is 3-phosphoshikimate 1-carboxyvinyltransferase.